A 665-amino-acid chain; its full sequence is F-box/WD repeat-containing protein lin-23 (665 aa).

Residues 81–127 enclose the F-box domain; it reads RDFISNLPAHLVELILFNVNSDSLKSCEEVSTSWRCALARGQHWKKL. WD repeat units follow at residues 220 to 257, 260 to 299, 301 to 337, 343 to 380, 383 to 420, 423 to 460, and 472 to 509; these read ENSK…CSRI, GHTG…KTLI, HCEA…DITI, GHRA…FVRT, GHRR…CLRV, GHEE…DPRA, and QHTG…PSGL. The disordered stretch occupies residues 574 to 665; the sequence is AAAEAARGAG…VDEEMPDGGP (92 aa). Acidic residues-rich tracts occupy residues 584-595 and 655-665; these read DNDESSSEEDLD and DVDEEMPDGGP.

In terms of assembly, part of a SCF (SKP1-cullin-F-box) protein ligase complex.

It localises to the cytoplasm. In terms of biological role, functions cell autonomously to negatively regulate cell cycle progression. Required to restrain cell proliferation in response to developmental cues. Probably recognizes and binds to some proteins and promotes their ubiquitination and degradation. This Caenorhabditis elegans protein is F-box/WD repeat-containing protein lin-23 (lin-23).